The chain runs to 247 residues: Adenosylcobinamide-GDP ribazoletransferase (247 aa).

The next 5 membrane-spanning stretches (helical) occupy residues 34–54 (IITFPLIGLLLGAISGLVFMV), 59–79 (CGVPLAALFSVLVLALMTGGF), 113–133 (GGLALIFVVLAKILVLSELAL), 138–158 (ILASLAAACAVSRGTAALLMY), and 194–214 (VLLPGMHGVAAMVVTMVAIFI).

It belongs to the CobS family. The cofactor is Mg(2+).

The protein localises to the cell inner membrane. The catalysed reaction is alpha-ribazole + adenosylcob(III)inamide-GDP = adenosylcob(III)alamin + GMP + H(+). It catalyses the reaction alpha-ribazole 5'-phosphate + adenosylcob(III)inamide-GDP = adenosylcob(III)alamin 5'-phosphate + GMP + H(+). Its pathway is cofactor biosynthesis; adenosylcobalamin biosynthesis; adenosylcobalamin from cob(II)yrinate a,c-diamide: step 7/7. Joins adenosylcobinamide-GDP and alpha-ribazole to generate adenosylcobalamin (Ado-cobalamin). Also synthesizes adenosylcobalamin 5'-phosphate from adenosylcobinamide-GDP and alpha-ribazole 5'-phosphate. The sequence is that of Adenosylcobinamide-GDP ribazoletransferase from Escherichia coli (strain 55989 / EAEC).